Reading from the N-terminus, the 164-residue chain is UPF0478 protein SSP1024 (164 aa).

A helical membrane pass occupies residues 7-27 (IAGIIAAVAFLILVIGIVVVL). The tract at residues 136 to 164 (RNRRDSANYKTSSVANETNHSYTTRVDNK) is disordered. Residues 143-164 (NYKTSSVANETNHSYTTRVDNK) are compositionally biased toward polar residues.

This sequence belongs to the UPF0478 family.

The protein resides in the cell membrane. The sequence is that of UPF0478 protein SSP1024 from Staphylococcus saprophyticus subsp. saprophyticus (strain ATCC 15305 / DSM 20229 / NCIMB 8711 / NCTC 7292 / S-41).